The primary structure comprises 301 residues: Transcription elongation factor A protein 1 (301 aa).

An N-acetylmethionine modification is found at M1. The TFIIS N-terminal domain occupies 3–80 (DEVIRIAKKM…KSWKKLLDGP (78 aa)). K55 is covalently cross-linked (Glycyl lysine isopeptide (Lys-Gly) (interchain with G-Cter in ubiquitin)). A phosphoserine mark is found at S57, S81, S97, and S100. The segment covering 76-93 (LLDGPSTDKDSEEKKKDT) has biased composition (basic and acidic residues). A disordered region spans residues 76-139 (LLDGPSTDKD…FPRAPSTSDS (64 aa)). Residues 140–256 (VRLKCREMLA…EHQMAKTGGT (117 aa)) form the TFIIS central domain. A TFIIS-type zinc finger spans residues 259 to 299 (DLFTCGKCKKKNCTYTQVQTRSADEPMTTFVVCNECGNRWK). C263, C266, C291, and C294 together coordinate Zn(2+).

Belongs to the TFS-II family. As to quaternary structure, interacts with EAF2. Associates with UBR5 and forms a transcription regulatory complex made of CDK9, Pol II, UBR5 and TCEA1/TFIIS. Part of TBP-based Pol II pre-initiation complex (PIC), in which Pol II core assembles with general transcription factors and other specific initiation factors including GTF2E1, GTF2E2, GTF2F1, GTF2F2, TCEA1, ERCC2, ERCC3, GTF2H2, GTF2H3, GTF2H4, GTF2H5, GTF2A1, GTF2A2, GTF2B and TBP; this large multi-subunit PIC complex mediates DNA unwinding and targets Pol II core to the transcription start site where the first phosphodiester bond forms.

The protein localises to the nucleus. Its function is as follows. Necessary for efficient RNA polymerase II transcription elongation past template-encoded arresting sites. The arresting sites in DNA have the property of trapping a certain fraction of elongating RNA polymerases that pass through, resulting in locked ternary complexes. Cleavage of the nascent transcript by S-II allows the resumption of elongation from the new 3'-terminus. The protein is Transcription elongation factor A protein 1 (TCEA1) of Bos taurus (Bovine).